The following is a 503-amino-acid chain: Transmembrane protein 184C (503 aa).

Helical transmembrane passes span 17–37, 48–68, 83–103, 115–135, 212–232, 254–274, and 287–307; these read LLIL…IWEF, VWFI…CGIL, IIRI…ALKY, ECYE…YLTI, YLVI…LLFY, VVFV…VGVI, and AVAT…AAIA. Disordered stretches follow at residues 358 to 391 and 479 to 503; these read PKKK…SPVG and SPKP…STDS. Positions 373–388 are enriched in low complexity; the sequence is SSLLSASSQDSSKPSS. A compositionally biased stretch (polar residues) spans 494 to 503; it reads PEGSDSSTDS.

This sequence belongs to the TMEM184 family.

The protein resides in the membrane. Its function is as follows. Possible tumor suppressor which may play a role in cell growth. The protein is Transmembrane protein 184C (Tmem184c) of Rattus norvegicus (Rat).